A 249-amino-acid polypeptide reads, in one-letter code: tRNA pseudouridine synthase A (249 aa).

Catalysis depends on aspartate 54, which acts as the Nucleophile. Substrate is bound at residue tyrosine 112.

It belongs to the tRNA pseudouridine synthase TruA family. Homodimer.

The enzyme catalyses uridine(38/39/40) in tRNA = pseudouridine(38/39/40) in tRNA. Its function is as follows. Formation of pseudouridine at positions 38, 39 and 40 in the anticodon stem and loop of transfer RNAs. In Latilactobacillus sakei subsp. sakei (strain 23K) (Lactobacillus sakei subsp. sakei), this protein is tRNA pseudouridine synthase A.